A 193-amino-acid polypeptide reads, in one-letter code: MYHDLIRSELNEAADTLANFLKDDSNIDAIQRAAILLADSFKAGGKVLSCGNGGSHCDAMHFAEELTGRYRENRPGYPAIAISDVSHLSCVSNDFGYDYVFSRYVEAVDREGDVLLGISTSGNSGNIIKAIEAARAKGMKVITLTGKDGGKMAGSADIEIRVPHFGYADRIQEIHIKVIHILIQLIEKEMVKA.

Positions 37 to 193 (LADSFKAGGK…QLIEKEMVKA (157 aa)) constitute an SIS domain. 52-54 (NGG) serves as a coordination point for substrate. Zn(2+)-binding residues include H61 and E65. Substrate contacts are provided by residues E65, 93-94 (ND), 119-121 (STS), S124, and Q172. The Zn(2+) site is built by Q172 and H180.

This sequence belongs to the SIS family. GmhA subfamily. In terms of assembly, homotetramer. Zn(2+) is required as a cofactor.

The protein localises to the cytoplasm. The catalysed reaction is 2 D-sedoheptulose 7-phosphate = D-glycero-alpha-D-manno-heptose 7-phosphate + D-glycero-beta-D-manno-heptose 7-phosphate. Its pathway is carbohydrate biosynthesis; D-glycero-D-manno-heptose 7-phosphate biosynthesis; D-glycero-alpha-D-manno-heptose 7-phosphate and D-glycero-beta-D-manno-heptose 7-phosphate from sedoheptulose 7-phosphate: step 1/1. The protein operates within bacterial outer membrane biogenesis; LPS core biosynthesis. In terms of biological role, catalyzes the isomerization of sedoheptulose 7-phosphate in D-glycero-D-manno-heptose 7-phosphate. This is Phosphoheptose isomerase from Yersinia pestis.